A 658-amino-acid chain; its full sequence is MYPPPAPPPAPHRDFISVTLSLGESYDNSKSRRRRSCWRKWKQLSRLQRNVILFVLGFLILCGFLYSLHTADQWKALSGRPAEVEKMKQEVLPVLPAPQKESAEQEGFADILSQKRQRHFRRGPPHLQIRPPNTVSKDGMQDDAKEREAALGKAQQEENTQRTVISWRGAVIEPEQATELPYKRAEASIKPLVLASKIWKEPAPPNERQKGVIEAFLHAWKGYQKFAWGHDELKPVSKTFSEWFGLGLTLIDALDTMWILGLKQEFKQARKWVSENLDFQKNVDVNLFESTIRILGGLLSTYHLSGDSLFLTKAEDFGKRLMPAFTTPSKIPYSDVNIGTGFAHSPQWTSDSTVAEVTSIQLEFRELSRLTGIKKFQEAVEEVTKHIHSLSGKKDGLVPMFINTNSGLFTHPGVFTLGARADSYYEYLLKQWIQGGKKETQLLEDYVKAIEGIKAHLLRQSQPRKLTFVGELAHGRFSAKMDHLVCFLPGTLALGVHHGLPADHMDLARALMETCYQMNQQMETGLSPEIAHFNMYPRADHKDVEVKPADRHNLLRPETVESLFYLYRVTRDRKYQDWGWEILQSFNKYTRVPSGGYSSINNVQNSHKPEPRDKMESFFVGETLKYLYLLFSDDLELLSLDSCVFNTEAHPLPIWAPA.

Residues 1 to 50 (MYPPPAPPPAPHRDFISVTLSLGESYDNSKSRRRRSCWRKWKQLSRLQRN) lie on the Cytoplasmic side of the membrane. A helical; Signal-anchor for type II membrane protein transmembrane segment spans residues 51 to 71 (VILFVLGFLILCGFLYSLHTA). Topologically, residues 72-658 (DQWKALSGRP…AHPLPIWAPA (587 aa)) are lumenal. Serine 102 is subject to Phosphoserine. Residues 123 to 142 (GPPHLQIRPPNTVSKDGMQD) are disordered. Residue glutamate 289 is the Proton donor of the active site. Residue aspartate 422 is part of the active site. An intrachain disulfide couples cysteine 486 to cysteine 515. Glutamate 529 (proton donor) is an active-site residue. Residue glutamate 558 is part of the active site. Position 647 (threonine 647) interacts with Ca(2+).

It belongs to the glycosyl hydrolase 47 family. Ca(2+) serves as cofactor.

It is found in the endoplasmic reticulum membrane. The enzyme catalyses N(4)-(alpha-D-Man-(1-&gt;2)-alpha-D-Man-(1-&gt;2)-alpha-D-Man-(1-&gt;3)-[alpha-D-Man-(1-&gt;2)-alpha-D-Man-(1-&gt;3)-[alpha-D-Man-(1-&gt;2)-alpha-D-Man-(1-&gt;6)]-alpha-D-Man-(1-&gt;6)]-beta-D-Man-(1-&gt;4)-beta-D-GlcNAc-(1-&gt;4)-beta-D-GlcNAc)-L-asparaginyl-[protein] (N-glucan mannose isomer 9A1,2,3B1,2,3) + 4 H2O = N(4)-(alpha-D-Man-(1-&gt;3)-[alpha-D-Man-(1-&gt;3)-[alpha-D-Man-(1-&gt;6)]-alpha-D-Man-(1-&gt;6)]-beta-D-Man-(1-&gt;4)-beta-D-GlcNAc-(1-&gt;4)-beta-D-GlcNAc)-L-asparaginyl-[protein] (N-glucan mannose isomer 5A1,2) + 4 beta-D-mannose. It carries out the reaction N(4)-(alpha-D-Man-(1-&gt;2)-alpha-D-Man-(1-&gt;2)-alpha-D-Man-(1-&gt;3)-[alpha-D-Man-(1-&gt;3)-[alpha-D-Man-(1-&gt;2)-alpha-D-Man-(1-&gt;6)]-alpha-D-Man-(1-&gt;6)]-beta-D-Man-(1-&gt;4)-beta-D-GlcNAc-(1-&gt;4)-beta-D-GlcNAc)-L-asparaginyl-[protein] (N-glucan mannose isomer 8A1,2,3B1,3) + 3 H2O = N(4)-(alpha-D-Man-(1-&gt;3)-[alpha-D-Man-(1-&gt;3)-[alpha-D-Man-(1-&gt;6)]-alpha-D-Man-(1-&gt;6)]-beta-D-Man-(1-&gt;4)-beta-D-GlcNAc-(1-&gt;4)-beta-D-GlcNAc)-L-asparaginyl-[protein] (N-glucan mannose isomer 5A1,2) + 3 beta-D-mannose. The protein operates within protein modification; protein glycosylation. Functionally, involved in glycoprotein quality control targeting of misfolded glycoproteins for degradation. It primarily trims a single alpha-1,2-linked mannose residue from Man(9)GlcNAc(2) to produce Man(8)GlcNAc(2), but at high enzyme concentrations, as found in the ER quality control compartment (ERQC), it further trims the carbohydrates to Man(5-6)GlcNAc(2). This chain is Endoplasmic reticulum mannosyl-oligosaccharide 1,2-alpha-mannosidase (Man1b1), found in Mus musculus (Mouse).